We begin with the raw amino-acid sequence, 195 residues long: Pyruvoyl-dependent arginine decarboxylase AaxB (195 aa).

Pyruvic acid (Ser) is present on Ser-53.

The protein belongs to the pyruvoyl-dependent arginine decarboxylase family. As to quaternary structure, trimer of an alpha-beta dimer. Requires pyruvate as cofactor.

The protein localises to the cytoplasm. It catalyses the reaction L-arginine + H(+) = agmatine + CO2. In terms of biological role, part of the AaxABC system, catalyzes the decarboxylation of L-arginine. The arginine uptake by the bacterium in the macrophage may be a virulence factor against the host innate immune response. The chain is Pyruvoyl-dependent arginine decarboxylase AaxB (aaxB) from Chlamydia caviae (strain ATCC VR-813 / DSM 19441 / 03DC25 / GPIC) (Chlamydophila caviae).